Here is a 383-residue protein sequence, read N- to C-terminus: ATP phosphoribosyltransferase regulatory subunit (383 aa).

Belongs to the class-II aminoacyl-tRNA synthetase family. HisZ subfamily. In terms of assembly, heteromultimer composed of HisG and HisZ subunits.

It is found in the cytoplasm. It participates in amino-acid biosynthesis; L-histidine biosynthesis; L-histidine from 5-phospho-alpha-D-ribose 1-diphosphate: step 1/9. Its function is as follows. Required for the first step of histidine biosynthesis. May allow the feedback regulation of ATP phosphoribosyltransferase activity by histidine. In Paraburkholderia xenovorans (strain LB400), this protein is ATP phosphoribosyltransferase regulatory subunit.